Consider the following 117-residue polypeptide: MKHLWFFLLLVAAPRWVLSQVQLQESGPGLVKPSDTLSLTCAVSGYSISSSNWWGWIRQPPGKGLEWIGYIYYSGSTYYNPSLKSRVTMSVDTSKNQFSLKLSSVTAVDTAVYYCAR.

Residues 1–19 (MKHLWFFLLLVAAPRWVLS) form the signal peptide. The interval 20 to 44 (QVQLQESGPGLVKPSDTLSLTCAVS) is framework-1. Residues 20-117 (QVQLQESGPG…VDTAVYYCAR (98 aa)) form the Ig-like domain. The cysteines at positions 41 and 115 are disulfide-linked. Residues 45 to 53 (GYSISSSNW) form a complementarity-determining-1 region. The tract at residues 54 to 70 (WGWIRQPPGKGLEWIGY) is framework-2. A complementarity-determining-2 region spans residues 71–77 (IYYSGST). Positions 78–115 (YYNPSLKSRVTMSVDTSKNQFSLKLSSVTAVDTAVYYC) are framework-3. Residues 116–117 (AR) form a complementarity-determining-3 region.

In terms of assembly, immunoglobulins are composed of two identical heavy chains and two identical light chains; disulfide-linked.

It is found in the secreted. Its subcellular location is the cell membrane. Its function is as follows. V region of the variable domain of immunoglobulin heavy chains that participates in the antigen recognition. Immunoglobulins, also known as antibodies, are membrane-bound or secreted glycoproteins produced by B lymphocytes. In the recognition phase of humoral immunity, the membrane-bound immunoglobulins serve as receptors which, upon binding of a specific antigen, trigger the clonal expansion and differentiation of B lymphocytes into immunoglobulins-secreting plasma cells. Secreted immunoglobulins mediate the effector phase of humoral immunity, which results in the elimination of bound antigens. The antigen binding site is formed by the variable domain of one heavy chain, together with that of its associated light chain. Thus, each immunoglobulin has two antigen binding sites with remarkable affinity for a particular antigen. The variable domains are assembled by a process called V-(D)-J rearrangement and can then be subjected to somatic hypermutations which, after exposure to antigen and selection, allow affinity maturation for a particular antigen. The sequence is that of Immunoglobulin heavy variable 4-28 from Homo sapiens (Human).